A 213-amino-acid polypeptide reads, in one-letter code: Orotate phosphoribosyltransferase (213 aa).

K25 contributes to the 5-phospho-alpha-D-ribose 1-diphosphate binding site. 33-34 (FF) lines the orotate pocket. Residues 71 to 72 (YK), R98, K99, K102, H104, and 124 to 132 (DDVITSGTA) contribute to the 5-phospho-alpha-D-ribose 1-diphosphate site. The orotate site is built by T128 and R156.

It belongs to the purine/pyrimidine phosphoribosyltransferase family. PyrE subfamily. In terms of assembly, homodimer. It depends on Mg(2+) as a cofactor.

The enzyme catalyses orotidine 5'-phosphate + diphosphate = orotate + 5-phospho-alpha-D-ribose 1-diphosphate. The protein operates within pyrimidine metabolism; UMP biosynthesis via de novo pathway; UMP from orotate: step 1/2. Catalyzes the transfer of a ribosyl phosphate group from 5-phosphoribose 1-diphosphate to orotate, leading to the formation of orotidine monophosphate (OMP). In Buchnera aphidicola subsp. Acyrthosiphon pisum (strain 5A), this protein is Orotate phosphoribosyltransferase.